Consider the following 139-residue polypeptide: Maximins 4/H3 type 5 (139 aa).

Residues 1–18 (MNFKYIFAVSFLIASAYA) form the signal peptide. Positions 19–43 (RSVQNDEQSLSQRDVLEEESLREIR) are excised as a propeptide. N70 is modified (asparagine amide). A propeptide spanning residues 74–118 (TAEEHEVMKRLEAVMRDLDSLDHPEEASERETRGFNQDEIAKEKR) is cleaved from the precursor. The residue at position 138 (I138) is an Isoleucine amide.

Belongs to the bombinin family. Expressed by the skin glands.

The protein resides in the secreted. In terms of biological role, maximin-4 shows antibacterial activity against both Gram-positive and Gram-negative bacteria. It also shows antimicrobial activity against the fungus C.albicans, but not against A.flavus nor P.uticale. It has little hemolytic activity. It does not possess a significant cytotoxicity against tumor cell lines. It does not possess a significant anti-HIV activity. Maximin-H3 shows antibacterial activity against both Gram-positive and Gram-negative bacteria. It also shows antimicrobial activity against the fungus C.albicans. Shows strong hemolytic activity. This Bombina maxima (Giant fire-bellied toad) protein is Maximins 4/H3 type 5.